Consider the following 118-residue polypeptide: Large ribosomal subunit protein bL20 (118 aa).

Belongs to the bacterial ribosomal protein bL20 family.

Functionally, binds directly to 23S ribosomal RNA and is necessary for the in vitro assembly process of the 50S ribosomal subunit. It is not involved in the protein synthesizing functions of that subunit. The sequence is that of Large ribosomal subunit protein bL20 from Rhodopirellula baltica (strain DSM 10527 / NCIMB 13988 / SH1).